A 186-amino-acid chain; its full sequence is Interferon beta (186 aa).

Residues 1-21 form the signal peptide; sequence MTYRWILPMALLLCFSTTALS. Tyrosine 24 carries the post-translational modification Phosphotyrosine. Cysteine 52 and cysteine 161 are disulfide-bonded. 2 N-linked (GlcNAc...) asparagine glycosylation sites follow: asparagine 101 and asparagine 136.

This sequence belongs to the alpha/beta interferon family. Monomer.

The protein resides in the secreted. Type I interferon cytokine that plays a key role in the innate immune response to infection, developing tumors and other inflammatory stimuli. Signals via binding to high-affinity (IFNAR2) and low-affinity (IFNAR1) heterodimeric receptor, activating the canonical Jak-STAT signaling pathway resulting in transcriptional activation or repression of interferon-regulated genes that encode the effectors of the interferon response, such as antiviral proteins, regulators of cell proliferation and differentiation, and immunoregulatory proteins. Signals mostly via binding to a IFNAR1-IFNAR2 heterodimeric receptor, but can also function with IFNAR1 alone and independently of Jak-STAT pathways. Elicits a wide variety of responses, including antiviral and antibacterial activities, and can regulate the development of B-cells, myelopoiesis and lipopolysaccharide (LPS)-inducible production of tumor necrosis factor. Plays a role in neuronal homeostasis by regulating dopamine turnover and protecting dopaminergic neurons: acts by promoting neuronal autophagy and alpha-synuclein clearance, thereby preventing dopaminergic neuron loss. IFNB1 is more potent than interferon-alpha (IFN-alpha) in inducing the apoptotic and antiproliferative pathways required for control of tumor cell growth. The protein is Interferon beta (IFNB1) of Equus caballus (Horse).